A 570-amino-acid polypeptide reads, in one-letter code: Frizzled-2 (570 aa).

The signal sequence occupies residues 1-28 (MRARSALPRSALPRLLLPLLLLPAAGPA). Over 29–252 (QFHGEKGISI…HHHTRFARLW (224 aa)) the chain is Extracellular. The region spanning 39–158 (PDHGFCQPIS…HGAEQICVGQ (120 aa)) is the FZ domain. 5 disulfide bridges follow: cysteine 44–cysteine 105, cysteine 52–cysteine 98, cysteine 89–cysteine 126, cysteine 115–cysteine 155, and cysteine 119–cysteine 143. Asparagine 58 carries an N-linked (GlcNAc...) asparagine glycan. N-linked (GlcNAc...) asparagine glycosylation occurs at asparagine 159. The disordered stretch occupies residues 166-194 (PALLTTAPPSGLQPGAGGTPGGPGGGGAP). The span at 179 to 193 (PGAGGTPGGPGGGGA) shows a compositional bias: gly residues. The chain crosses the membrane as a helical span at residues 253–273 (ILTWSVLCCASTFFTVTTSLV). At 274 to 284 (AMQRFRYPERP) the chain is on the cytoplasmic side. A helical membrane pass occupies residues 285–305 (IIFLSGCYTMVSVAYIAGFVL). Residues 306 to 332 (QERVVCNERFSEDGYRTVGQGTKKEGC) lie on the Extracellular side of the membrane. A helical membrane pass occupies residues 333–353 (TILFMMLYFFSMASSIWWVIL). The Cytoplasmic portion of the chain corresponds to 354–375 (SLTWFLAAGMKWGHAAIEANSQ). A helical membrane pass occupies residues 376–396 (YFHLAAWAVPAVKTITILAMG). Topologically, residues 397–419 (QIDGDLLSGVCFVGLNRLDPLRG) are extracellular. Residues 420–440 (FVLAPLFVYLFIGTSFLLAGF) traverse the membrane as a helical segment. Over 441–466 (VSLFRIRTIMKHDGTKTEPLERLMVR) the chain is Cytoplasmic. The helical transmembrane segment at 467–487 (IGVFSVLYTVPATIVIACYFY) threads the bilayer. Residues 488-524 (EQAFREHWERSWVSQHCKSLAIPCPAHYTPRTSPDFT) are Extracellular-facing. The chain crosses the membrane as a helical span at residues 525-545 (VYMIKYLMTLIVGITSGFWIW). Topologically, residues 546–570 (SGKTLHSWRKFYTRLTNSRHGETTV) are cytoplasmic. A Lys-Thr-X-X-X-Trp motif, mediates interaction with the PDZ domain of Dvl family members motif is present at residues 548 to 553 (KTLHSW). A PDZ-binding motif is present at residues 568–570 (TTV).

It belongs to the G-protein coupled receptor Fz/Smo family. Post-translationally, ubiquitinated by ZNRF3, leading to its degradation by the proteasome. In terms of tissue distribution, widely expressed. Most abundant in kidney, liver, uterus, ovary and heart. Lower levels seen in brain and intestine. Extremely low in calvaria, mammary glands and testis.

It is found in the membrane. The protein resides in the cell membrane. In terms of biological role, receptor for Wnt proteins. Most of frizzled receptors are coupled to the beta-catenin canonical signaling pathway, which leads to the activation of disheveled proteins, inhibition of GSK-3 kinase, nuclear accumulation of beta-catenin and activation of Wnt target genes. A second signaling pathway involving PKC and calcium fluxes has been seen for some family members, but it is not yet clear if it represents a distinct pathway or if it can be integrated in the canonical pathway, as PKC seems to be required for Wnt-mediated inactivation of GSK-3 kinase. Both pathways seem to involve interactions with G-proteins. May be involved in transduction and intercellular transmission of polarity information during tissue morphogenesis and/or in differentiated tissues. Activation by Wnt5A stimulates PKC activity via a G-protein-dependent mechanism. The protein is Frizzled-2 (Fzd2) of Rattus norvegicus (Rat).